The primary structure comprises 253 residues: MSSIGTGYDLGLFFSPDGRLFQAEYAYKAVENASTCIGIKCEDGVILALEKVVTSKLLKPRVNNRIGSVDRHIGIATTGFIPDGQHIVKRARDEATSWRDNYGSPIPGTVIADRLGNYVQLFTCYSSVRPFGVMSFVATYDSEGPHLYMVEPNGVYWGYNGAAAGKGRQVARNELEKLNFSSLKMKDAVKEAARILYATHDEENNKEHEIEMTWVGVETNGIHTPVPDELLQEAEAYARRIADGEEEDIAMQE.

The residue at position 104 (Ser104) is a Phosphoserine.

This sequence belongs to the peptidase T1A family. In terms of assembly, the 26S proteasome consists of a 20S proteasome core and two 19S regulatory subunits. The 20S proteasome core is composed of 28 subunits that are arranged in four stacked rings, resulting in a barrel-shaped structure. The two end rings are each formed by seven alpha subunits, and the two central rings are each formed by seven beta subunits. The catalytic chamber with the active sites is on the inside of the barrel.

It is found in the cytoplasm. The protein resides in the nucleus. In terms of biological role, the proteasome is a multicatalytic proteinase complex which is characterized by its ability to cleave peptides with Arg, Phe, Tyr, Leu, and Glu adjacent to the leaving group at neutral or slightly basic pH. The proteasome has an ATP-dependent proteolytic activity. The polypeptide is Probable proteasome subunit alpha type-7 (pre10) (Schizosaccharomyces pombe (strain 972 / ATCC 24843) (Fission yeast)).